Consider the following 500-residue polypeptide: Probable cytosol aminopeptidase (500 aa).

Residues lysine 267 and aspartate 272 each coordinate Mn(2+). The active site involves lysine 279. Mn(2+)-binding residues include aspartate 290, aspartate 349, and glutamate 351. The active site involves arginine 353.

Belongs to the peptidase M17 family. It depends on Mn(2+) as a cofactor.

It is found in the cytoplasm. It carries out the reaction Release of an N-terminal amino acid, Xaa-|-Yaa-, in which Xaa is preferably Leu, but may be other amino acids including Pro although not Arg or Lys, and Yaa may be Pro. Amino acid amides and methyl esters are also readily hydrolyzed, but rates on arylamides are exceedingly low.. The catalysed reaction is Release of an N-terminal amino acid, preferentially leucine, but not glutamic or aspartic acids.. In terms of biological role, presumably involved in the processing and regular turnover of intracellular proteins. Catalyzes the removal of unsubstituted N-terminal amino acids from various peptides. This Tolumonas auensis (strain DSM 9187 / NBRC 110442 / TA 4) protein is Probable cytosol aminopeptidase.